Consider the following 104-residue polypeptide: Vesicle-associated membrane protein 3 (104 aa).

A disordered region spans residues Met-1 to Gln-23. Topologically, residues Met-1–Lys-81 are cytoplasmic. A compositionally biased stretch (low complexity) spans Ala-7 to Ser-16. The region spanning Arg-18–Lys-78 is the v-SNARE coiled-coil homology domain. Residues Lys-70, Lys-72, and Lys-81 each participate in a glycyl lysine isopeptide (Lys-Gly) (interchain with G-Cter in ubiquitin) cross-link. A helical; Anchor for type IV membrane protein membrane pass occupies residues Met-82 to Ile-102. The Vesicular segment spans residues Ser-103 to Ser-104.

The protein belongs to the synaptobrevin family. As to quaternary structure, interacts with POPDC1 (via the C-terminus cytoplasmic tail). Interacts with BCAP31; involved in VAMP3 export from the endoplasmic reticulum. Interacts with BAIAP3; this interaction is increased in the presence of calcium. Interacts with PICALM. Post-translationally, ubiquitinated by RNF167 at Lys-70, Lys-72 and Lys-81, regulating the recycling endosome pathway.

Its subcellular location is the early endosome membrane. It is found in the recycling endosome membrane. The protein localises to the synapse. It localises to the synaptosome. In terms of biological role, SNARE involved in vesicular transport from the late endosomes to the trans-Golgi network. The chain is Vesicle-associated membrane protein 3 (VAMP3) from Bos taurus (Bovine).